The following is a 325-amino-acid chain: Small ribosomal subunit protein uS4m (325 aa).

In terms of domain architecture, S4 RNA-binding spans 146–209; sequence KRIDMILLRS…HKQNLIHRLK (64 aa).

It belongs to the universal ribosomal protein uS4 family.

It is found in the mitochondrion. This chain is Small ribosomal subunit protein uS4m (mrps4), found in Dictyostelium citrinum (Slime mold).